A 298-amino-acid chain; its full sequence is tRNA pseudouridine synthase B (298 aa).

Catalysis depends on aspartate 42, which acts as the Nucleophile.

This sequence belongs to the pseudouridine synthase TruB family. Type 1 subfamily.

The catalysed reaction is uridine(55) in tRNA = pseudouridine(55) in tRNA. Responsible for synthesis of pseudouridine from uracil-55 in the psi GC loop of transfer RNAs. The protein is tRNA pseudouridine synthase B of Mycobacterium tuberculosis (strain CDC 1551 / Oshkosh).